The primary structure comprises 167 residues: 16S rRNA aminocarboxypropyltransferase (167 aa).

S-adenosyl-L-methionine-binding residues include Thr-17, Val-62, Leu-84, Tyr-99, and Ser-103.

This sequence belongs to the TDD superfamily. TSR3 family.

It is found in the cytoplasm. It carries out the reaction an N(1)-methylpseudouridine in rRNA + S-adenosyl-L-methionine = N(1)-methyl-N(3)-[(3S)-3-amino-3-carboxypropyl]pseudouridine in rRNA + S-methyl-5'-thioadenosine + H(+). Its function is as follows. Aminocarboxypropyltransferase that catalyzes the aminocarboxypropyl transfer on pseudouridine corresponding to position 914 in M.jannaschii 16S rRNA. It constitutes the last step in biosynthesis of the hypermodified N1-methyl-N3-(3-amino-3-carboxypropyl) pseudouridine (m1acp3-Psi). This chain is 16S rRNA aminocarboxypropyltransferase, found in Sulfurisphaera tokodaii (strain DSM 16993 / JCM 10545 / NBRC 100140 / 7) (Sulfolobus tokodaii).